Reading from the N-terminus, the 157-residue chain is Urease accessory protein UreE (157 aa).

Belongs to the UreE family.

It is found in the cytoplasm. In terms of biological role, involved in urease metallocenter assembly. Binds nickel. Probably functions as a nickel donor during metallocenter assembly. In Corynebacterium glutamicum (strain ATCC 13032 / DSM 20300 / JCM 1318 / BCRC 11384 / CCUG 27702 / LMG 3730 / NBRC 12168 / NCIMB 10025 / NRRL B-2784 / 534), this protein is Urease accessory protein UreE.